We begin with the raw amino-acid sequence, 243 residues long: Nuclear cap-binding protein subunit 2 (243 aa).

MRNA is bound by residues tyrosine 14, tyrosine 37, 106 to 110, 117 to 121, and 127 to 128; these read RVDFD, RQWGR, and QV. In terms of domain architecture, RRM spans 34 to 112; that stretch reads VTVYVGNMSF…RPIRVDFDWG (79 aa). 2 disordered regions span residues 120–144 and 161–243; these read GRGRSGGQVRDEYRTDYDPGRGGYG and GGAF…RRRR. 2 stretches are compositionally biased toward basic and acidic residues: residues 128–138 and 173–228; these read VRDEYRTDYDP and DRGD…REKG.

The protein belongs to the RRM NCBP2 family. As to quaternary structure, component of the nuclear cap-binding complex (CBC), a heterodimer composed of ABH1/CBP80 and CBP20 that interacts with m7GpppG-capped RNA.

The protein resides in the nucleus. It localises to the cytoplasm. Component of the cap-binding complex (CBC), which binds co-transcriptionally to the 5' cap of pre-mRNAs and is involved in various processes such as pre-mRNA splicing and RNA-mediated gene silencing (RNAi) by microRNAs (miRNAs). The CBC complex is involved in miRNA-mediated RNA interference and is required for primary miRNA processing. In the CBC complex, CBP20 recognizes and binds capped RNAs (m7GpppG-capped RNA) but requires ABH1/CBP80 to stabilize the movement of its N-terminal loop and lock the CBC into a high affinity cap-binding state with the cap structure. CBP20 also plays a role in stabilization of ABH1/CBP80 and ABH1/CBP80 localization to the nucleus. The protein is Nuclear cap-binding protein subunit 2 (CBP20) of Oryza sativa subsp. japonica (Rice).